The sequence spans 240 residues: Sialidase 85-1.2 (240 aa).

Positions 127 to 142 (DDDDGGDDDDEEDSQE) are enriched in acidic residues. Disordered stretches follow at residues 127 to 158 (DDDD…GKKP) and 221 to 240 (HRGG…QRDA). Residues 144–155 (SSPKESSPEKIG) are compositionally biased toward basic and acidic residues.

This sequence belongs to the glycosyl hydrolase 33 family.

It catalyses the reaction Hydrolysis of alpha-(2-&gt;3)-, alpha-(2-&gt;6)-, alpha-(2-&gt;8)- glycosidic linkages of terminal sialic acid residues in oligosaccharides, glycoproteins, glycolipids, colominic acid and synthetic substrates.. Its function is as follows. Developmentally regulated neuraminidase implicated in parasite invasion of cells. May contribute to the pathology during T.cruzi infection by cleaving sialic acid from cells of the immune system. In Trypanosoma cruzi, this protein is Sialidase 85-1.2 (SA85-1.2).